Consider the following 287-residue polypeptide: Histone H1 (287 aa).

Residues 1-11 (MATEEPVIVNE) are compositionally biased toward low complexity. 2 disordered regions span residues 1 to 58 (MATE…THPP) and 120 to 287 (YKLP…RGRK). Positions 33 to 51 (GKAKKETKAKKPAAPRKRS) are enriched in basic residues. Residues 55 to 124 (THPPYFEMIK…KVKNSYKLPS (70 aa)) form the H15 domain. Residues 135 to 202 (AKKKPAAAKS…KAKPVAKAKP (68 aa)) show a composition bias toward basic residues. Low complexity predominate over residues 203-248 (KAAAAAKPKAAVKPKAAPAKTKAAVKPNLKAKTTTAKVAKTATRTT). Positions 276-287 (PAKKATPKRGRK) are enriched in basic residues.

It belongs to the histone H1/H5 family.

The protein resides in the nucleus. The protein localises to the chromosome. In terms of biological role, histones H1 are necessary for the condensation of nucleosome chains into higher-order structures. This Solanum lycopersicum (Tomato) protein is Histone H1.